Reading from the N-terminus, the 226-residue chain is PKHD-type hydroxylase Bpet2704 (226 aa).

Residues 78–178 (KIFPPLFNRY…RISAFFWMQS (101 aa)) enclose the Fe2OG dioxygenase domain. Fe cation is bound by residues His-96, Asp-98, and His-159. Arg-169 is a 2-oxoglutarate binding site.

The cofactor is Fe(2+). L-ascorbate is required as a cofactor.

The chain is PKHD-type hydroxylase Bpet2704 from Bordetella petrii (strain ATCC BAA-461 / DSM 12804 / CCUG 43448).